A 521-amino-acid polypeptide reads, in one-letter code: Signal recognition particle protein (521 aa).

GTP is bound by residues 107-114 (GLQGSGKT), 196-200 (DTAGR), and 254-257 (TKLD). The segment at 436-505 (GGMGIPGMGR…MPDGLNELPP (70 aa)) is disordered. Over residues 447–462 (SATRKSKGGKGKKRAR) the composition is skewed to basic residues.

Belongs to the GTP-binding SRP family. SRP54 subfamily. Part of the signal recognition particle protein translocation system, which is composed of SRP and FtsY.

It is found in the cytoplasm. It catalyses the reaction GTP + H2O = GDP + phosphate + H(+). In terms of biological role, involved in targeting and insertion of nascent membrane proteins into the cytoplasmic membrane. Binds to the hydrophobic signal sequence of the ribosome-nascent chain (RNC) as it emerges from the ribosomes. The SRP-RNC complex is then targeted to the cytoplasmic membrane where it interacts with the SRP receptor FtsY. The sequence is that of Signal recognition particle protein from Mycobacterium leprae (strain TN).